Here is a 158-residue protein sequence, read N- to C-terminus: Cyclic pyranopterin monophosphate synthase (158 aa).

Substrate contacts are provided by residues leucine 76–histidine 78 and methionine 114–glutamate 115. Residue aspartate 129 is part of the active site.

The protein belongs to the MoaC family. In terms of assembly, homohexamer; trimer of dimers.

The enzyme catalyses (8S)-3',8-cyclo-7,8-dihydroguanosine 5'-triphosphate = cyclic pyranopterin phosphate + diphosphate. Its pathway is cofactor biosynthesis; molybdopterin biosynthesis. In terms of biological role, catalyzes the conversion of (8S)-3',8-cyclo-7,8-dihydroguanosine 5'-triphosphate to cyclic pyranopterin monophosphate (cPMP). The protein is Cyclic pyranopterin monophosphate synthase of Shewanella baltica (strain OS155 / ATCC BAA-1091).